A 386-amino-acid polypeptide reads, in one-letter code: Cytochrome b (386 aa).

Transmembrane regions (helical) follow at residues 32–52 (FGSL…TLAM), 76–98 (WMIR…LHIG), 113–133 (PWSI…LGYV), and 179–199 (FFSL…MHLL). The heme b site is built by His-82 and His-96. Heme b is bound by residues His-183 and His-197. His-202 is an a ubiquinone binding site. 4 helical membrane passes run 225-245 (YTFK…LFLF), 289-309 (LGGV…PLLD), 321-341 (LMKF…WCGS), and 348-368 (FITL…IIVP).

This sequence belongs to the cytochrome b family. Fungal cytochrome b-c1 complex contains 10 subunits; 3 respiratory subunits, 2 core proteins and 5 low-molecular weight proteins. Cytochrome b-c1 complex is a homodimer. Heme b is required as a cofactor.

The protein localises to the mitochondrion inner membrane. Functionally, component of the ubiquinol-cytochrome c reductase complex (complex III or cytochrome b-c1 complex) that is part of the mitochondrial respiratory chain. The b-c1 complex mediates electron transfer from ubiquinol to cytochrome c. Contributes to the generation of a proton gradient across the mitochondrial membrane that is then used for ATP synthesis. The protein is Cytochrome b (cob) of Rhizopus oryzae (Mucormycosis agent).